Consider the following 265-residue polypeptide: MNNLYRDLAPVTEAAWAEIELEAARTFKRHIAGRRVVDVSDPGGPVTAAVSTGRLIDVKAPTNGVIAHLRASKPLVRLRVPFTLSRNEIDDVERGSKDSDWEPVKEAAKKLAFVEDRTIFEGYSAASIEGIRSASSNPALTLPEDPREIPDVISQALSELRLAGVDGPYSVLLSADVYTKVSETSDHGYPIREHLNRLVDGDIIWAPAIDGAFVLTTRGGDFDLQLGTDVAIGYASHDTDTVRLYLQETLTFLCYTAEASVALSH.

It belongs to the encapsulin family. Family 1 subfamily. As to quaternary structure, multimeric. The encapsulin nanocompartment is formed by 60 subunits. Monomers form pentamers which assemble to form shells. There are 12 pores where the pentamers meet as well as 3-fold axis channels and dimer channels; none are larger than 3-4 Angstroms in diameter. The N-terminus of the protein is inside the shell, the C-terminus is outside. In terms of processing, the initiator methionine is partially removed. When isolated from culture filtrate isoelectric focusing gives 3 bands, none of which are glycosylated.

Its subcellular location is the encapsulin nanocompartment. The protein resides in the secreted. It localises to the cell membrane. In terms of biological role, shell component of a type 1 encapsulin nanocompartment in situ; its cargo protects against oxidative stress at low pH. In situ and in E.coli assembles into proteinaceous shells about 22 nm in diameter with 2.5 nm thick walls. Cargo proteins are targeted to the interior via their C-terminal extensions; empty intact shells can be isolated in E.coli in the absence of cargo protein. There are at least 4 possible cargo proteins, DyP (encoded in the same locus), FolB, BfrB and Rv1762c; DyP and Rv1762c have been identified in vivo. Probably involved in protection against oxidative damage from the host immune response. A T-cell antigen found in bacterial culture cell filtrates, stimulates mouse immune response. Does not have detectable bacteriocin activity. This chain is Type 1 encapsulin shell protein, found in Mycobacterium tuberculosis (strain ATCC 25618 / H37Rv).